The following is a 719-amino-acid chain: DNA ligase (719 aa).

NAD(+)-binding positions include Asp-42 to Asp-46, Ser-92 to Leu-93, and Glu-126. Lys-128 functions as the N6-AMP-lysine intermediate in the catalytic mechanism. NAD(+)-binding residues include Arg-149, Glu-185, Lys-301, and Lys-325. The Zn(2+) site is built by Cys-430, Cys-433, Cys-448, and Cys-454. A BRCT domain is found at Ala-640–Asp-719.

It belongs to the NAD-dependent DNA ligase family. LigA subfamily. Mg(2+) serves as cofactor. The cofactor is Mn(2+).

The enzyme catalyses NAD(+) + (deoxyribonucleotide)n-3'-hydroxyl + 5'-phospho-(deoxyribonucleotide)m = (deoxyribonucleotide)n+m + AMP + beta-nicotinamide D-nucleotide.. Its function is as follows. DNA ligase that catalyzes the formation of phosphodiester linkages between 5'-phosphoryl and 3'-hydroxyl groups in double-stranded DNA using NAD as a coenzyme and as the energy source for the reaction. It is essential for DNA replication and repair of damaged DNA. The polypeptide is DNA ligase (Brucella suis biovar 1 (strain 1330)).